Reading from the N-terminus, the 215-residue chain is Cytochrome b6 (215 aa).

Residues I32 to F52 form a helical membrane-spanning segment. C35 lines the heme c pocket. 2 residues coordinate heme b: H86 and H100. 3 helical membrane passes run A90–F110, L116–Y136, and L186–I206. H187 and H202 together coordinate heme b.

This sequence belongs to the cytochrome b family. PetB subfamily. The 4 large subunits of the cytochrome b6-f complex are cytochrome b6, subunit IV (17 kDa polypeptide, PetD), cytochrome f and the Rieske protein, while the 4 small subunits are PetG, PetL, PetM and PetN. The complex functions as a dimer. Requires heme b as cofactor. It depends on heme c as a cofactor.

It is found in the plastid. The protein localises to the chloroplast thylakoid membrane. Functionally, component of the cytochrome b6-f complex, which mediates electron transfer between photosystem II (PSII) and photosystem I (PSI), cyclic electron flow around PSI, and state transitions. This Nymphaea alba (White water-lily) protein is Cytochrome b6.